A 400-amino-acid chain; its full sequence is uncharacterized protein (400 aa).

Basic and acidic residues predominate over residues 112–126; that stretch reads SESTAQIEKKPRKPL. The disordered stretch occupies residues 112–151; sequence SESTAQIEKKPRKPLDSVGLLEGDRNKRKKSPQMNDFNIK.

This is an uncharacterized protein from Homo sapiens (Human).